Reading from the N-terminus, the 375-residue chain is DNA replication and repair protein RecF (375 aa).

Position 30-37 (30-37 (GENAQGKT)) interacts with ATP.

Belongs to the RecF family.

The protein localises to the cytoplasm. Its function is as follows. The RecF protein is involved in DNA metabolism; it is required for DNA replication and normal SOS inducibility. RecF binds preferentially to single-stranded, linear DNA. It also seems to bind ATP. The protein is DNA replication and repair protein RecF of Latilactobacillus sakei subsp. sakei (strain 23K) (Lactobacillus sakei subsp. sakei).